Consider the following 285-residue polypeptide: MRMIIVSGRSGSGKSTALDVLEDNGFYCVDNLPAGLLPELAERALINTELAEPLLAVSIDARNLPSHLTRFPQMLSEVRLRNIQCDVLYLDADEATLLKRFSETRRRHPLSTADRSLAEAIRDETALLGPIIDLADLKINTTHLNLYQLRDALKLRLLNKPEPGTAFLIESFGFKRGMPVDADLVFDVRCLPNPYWKPELRDHSGLEQPVIDYLSVQPDVEEMFQDIFAYLNKWLPRFAASNRSYVTIAIGCTGGHHRSVYLTERLGQVLQQSLKNVQVRHRDLS.

An ATP-binding site is contributed by 8 to 15 (GRSGSGKS). 60-63 (DARN) is a GTP binding site.

Belongs to the RapZ-like family.

Functionally, displays ATPase and GTPase activities. This Pseudomonas syringae pv. syringae (strain B728a) protein is Nucleotide-binding protein Psyr_4150.